Here is a 798-residue protein sequence, read N- to C-terminus: Cold shock domain-containing protein E1 (798 aa).

The CSD 1 domain occupies 26–87 (ETGVIEKLLT…RTGKPIAIKL (62 aa)). K81 is subject to N6-acetyllysine. Residue K91 forms a Glycyl lysine isopeptide (Lys-Gly) (interchain with G-Cter in SUMO2) linkage. S123 is modified (phosphoserine). In terms of domain architecture, CSD 2; truncated spans 136–179 (VFYLTYTSEDVEGNVQLETGDKINFVIDNNKHTGAVSARNIMLL). One can recognise a CSD 3 domain in the interval 186–245 (YQGVVCAMKEAFGFIERGDVVKEIFFHYSEFKGDLETLQPGDDVEFTIKDRNGKEVATDV). A Phosphoserine modification is found at S276. The 41-residue stretch at 297–337 (LPFGDKDTKSKVTLLEGDHVRFNISTDRRDKLERATNIEVL) folds into the CSD 4; truncated domain. CSD domains are found at residues 349–410 (EMGV…AIRI) and 447–507 (NKGK…ATCV). S514 is subject to Phosphoserine. Residues 519-579 (LLGYVATLKD…KGNKVSAEKV (61 aa)) enclose the CSD 7 domain. Phosphoserine is present on S584. 2 consecutive CSD domains span residues 610-670 (PTQI…AYNI) and 674-735 (RRAT…ACNV). The SUZ-C domain maps to 748–789 (PRPDRLVNRLKNITLDDASAPRLMVLRQPRGPDNSMGFGAER). T761 is modified (phosphothreonine).

Belongs to the UNR family. As to quaternary structure, component of a multi subunit autoregulatory ribonucleoprotein complex (ARC), at least composed of IGF2BP1, PABPC1 and CSDE1. Interacts with STRAP. Part of a complex associated with the FOS mCRD domain and consisting of PABPC1, PAIP1, HNRPD and SYNCRIP. The interaction with PABPC1 is direct and RNA-independent. Interacts with EIF4ENIF1/4E-T.

The protein resides in the cytoplasm. The protein localises to the stress granule. It is found in the P-body. Its function is as follows. RNA-binding protein involved in translationally coupled mRNA turnover. Implicated with other RNA-binding proteins in the cytoplasmic deadenylation/translational and decay interplay of the FOS mRNA mediated by the major coding-region determinant of instability (mCRD) domain. Required for efficient formation of stress granules. This chain is Cold shock domain-containing protein E1, found in Rattus norvegicus (Rat).